A 138-amino-acid polypeptide reads, in one-letter code: Basic phospholipase A2 homolog CTs-K49a (138 aa).

The first 16 residues, 1 to 16 (MRTLWIMAVLLVVVEG), serve as a signal peptide directing secretion. Cystine bridges form between Cys-42-Cys-131, Cys-44-Cys-60, Cys-59-Cys-111, Cys-65-Cys-138, Cys-66-Cys-104, and Cys-91-Cys-102. The interval 121–133 (KKKKINLKLFCKK) is important for membrane-damaging activities in eukaryotes and bacteria; heparin-binding.

It belongs to the phospholipase A2 family. Group II subfamily. K49 sub-subfamily. As to expression, expressed by the venom gland.

It is found in the secreted. Functionally, snake venom phospholipase A2 homolog that lacks catalytic activity. It shows myotoxic and weak anticoagulant activities. A model of myotoxic mechanism has been proposed: an apo Lys49-PLA2 is activated by the entrance of a hydrophobic molecule (e.g. fatty acid) at the hydrophobic channel of the protein leading to a reorientation of a monomer. This reorientation causes a transition between 'inactive' to 'active' states, causing alignment of C-terminal and membrane-docking sites (MDoS) side-by-side and putting the membrane-disruption sites (MDiS) in the same plane, exposed to solvent and in a symmetric position for both monomers. The MDoS region stabilizes the toxin on membrane by the interaction of charged residues with phospholipid head groups. Subsequently, the MDiS region destabilizes the membrane with penetration of hydrophobic residues. This insertion causes a disorganization of the membrane, allowing an uncontrolled influx of ions (i.e. calcium and sodium), and eventually triggering irreversible intracellular alterations and cell death. In Trimeresurus stejnegeri (Chinese green tree viper), this protein is Basic phospholipase A2 homolog CTs-K49a.